Reading from the N-terminus, the 1026-residue chain is UPF0182 protein FRAAL6027 (1026 aa).

7 consecutive transmembrane segments (helical) span residues 13–33, 60–80, 108–128, 167–187, 208–228, 250–270, and 283–303; these read AKVI…VAIF, ILLF…NIVL, YMKL…GLSA, FLLG…VLTH, AHIS…YYLD, AVLP…VLFI, and LGAG…PAFI. Low complexity predominate over residues 877–888; that stretch reads AAAGAGTGATTT. 2 disordered regions span residues 877–916 and 958–1026; these read AAAG…LQDA and LASP…PPPG. The span at 889–903 shows a compositional bias: gly residues; the sequence is TGGGGQATTQGGGTG. Residues 970–1001 show a composition bias toward low complexity; that stretch reads PTPSRSAAPTTRGTAAGSAPPGTTPAVAAPAG. Residues 1016-1026 show a composition bias toward pro residues; the sequence is PQQPRAAPPPG.

It belongs to the UPF0182 family.

The protein localises to the cell membrane. This chain is UPF0182 protein FRAAL6027, found in Frankia alni (strain DSM 45986 / CECT 9034 / ACN14a).